We begin with the raw amino-acid sequence, 154 residues long: RxLR effector protein PexRD24 (154 aa).

The signal sequence occupies residues 1 to 22 (MHSSLLWLGAVVALLAVNNVTA). Positions 53–67 (RSLRAVETSEDEEER) match the RxLR-dEER motif. Residue K138 is a short sequence motif, PP1c-binding motif.

It belongs to the RxLR effector family. As to quaternary structure, interacts with the potato PP1c family proteins PP1c-1, PP1c-2 and PP1c-3.

The protein localises to the secreted. It localises to the host nucleus. The protein resides in the host nucleoplasm. It is found in the host nucleolus. Its function is as follows. Effector that interacts with isoforms of host protein phosphatase type 1c (PP1c), mimicking a regulatory subunit and causing their re-localization within the host nucleus. The holoenzymes formed with PP1c isoforms act to promote late blight by attenuating jasmonic acid (JA)- and salicylic acid (SA)-mediated transcriptional responses of the host plant. The polypeptide is RxLR effector protein PexRD24 (Phytophthora infestans (strain T30-4) (Potato late blight agent)).